Consider the following 314-residue polypeptide: Protein REGULATOR OF FATTY ACID COMPOSITION 3, chloroplastic (314 aa).

A chloroplast-targeting transit peptide spans 1–47 (MESLLHASSSLVSLRPRIDGRDSFINPSRVCLNPSLGRRGSKPLPLV). 2 disordered regions span residues 49-73 (AAKKKKSKKDDNHNFSARPDEATGP) and 214-314 (AITE…NVGG). The segment covering 56-69 (KKDDNHNFSARPDE) has biased composition (basic and acidic residues). Composition is skewed to acidic residues over residues 233-269 (EYYDDDEEEEIEEDEDEGEGEDEEDADNIEYEVDDDG) and 277-294 (GDEEEGEEEEDGASEQEE). Residues 295 to 308 (GQDKSTNGRRETRR) show a composition bias toward basic and acidic residues.

The protein belongs to the bacterial ribosomal protein bS6 family. Interacts with CFM3B/SPRT2 in plastids. Expressed ubiquitously in roots, leaves, stems, flower buds, flowers and siliques.

The protein localises to the plastid. It localises to the chloroplast. Functionally, prevents non-specific action of the splicing factor CFM3b during plastid rRNA biogenesis to improve the accuracy of plastid rRNA processing. Required for plastid functions such as photosynthesis, intracellular distribution, plastid rRNAs biosynthesis and plastid gene expression in roots. Involved in a sucrose-conditional process important for the organization of root lateral and apical meristems (e.g. establishment of RAM from pericycle and symplasmic connectivity), and subsequent primary and lateral roots development. Modulates C18 unsaturated fatty acid metabolism. This chain is Protein REGULATOR OF FATTY ACID COMPOSITION 3, chloroplastic, found in Arabidopsis thaliana (Mouse-ear cress).